The chain runs to 442 residues: Cation channel sperm-associated protein 4 (442 aa).

At 1–66 (MSEKHKWWQQ…TQMYIKQLLR (66 aa)) the chain is on the cytoplasmic side. Residues 67-88 (HPAFQLLLAFLLLSNAITIALR) form a helical membrane-spanning segment. The Extracellular portion of the chain corresponds to 89 to 98 (TNSYLGQKHY). A helical membrane pass occupies residues 99 to 125 (ELFSTIDDIVLTILICEVLLGWLNGFW). At 126-129 (IFWK) the chain is on the cytoplasmic side. The helical transmembrane segment at 130-153 (DGWNILNFAIVFILFMGFFIKQLD) threads the bilayer. The Extracellular portion of the chain corresponds to 154 to 156 (MVA). A helical membrane pass occupies residues 157–175 (ITYPLRVLRLVHVCMAVEP). At 176–188 (LARIIKVILQSMP) the chain is on the cytoplasmic side. The chain crosses the membrane as a helical span at residues 189–212 (DLANVMALILFFMLVFSVFGVTLF). Topologically, residues 213 to 222 (GAFVPKHFQN) are extracellular. Residues 223–234 (MGVALYTLFICI) constitute an intramembrane region (helical; Pore-forming). Residues 235-255 (TQDGWLDIYTDFQMDEREYAM) lie on the Extracellular side of the membrane. Residues 256 to 283 (EVGGAIYFAVFITLGAFIGLNLFVVVVT) form a helical membrane-spanning segment. Residues 284–442 (TNLEQMMKTG…NMVNKHKFSH (159 aa)) are Cytoplasmic-facing.

The protein belongs to the cation channel sperm-associated (TC 1.A.1.19) family. Component of the CatSper complex or CatSpermasome composed of the core pore-forming members CATSPER1, CATSPER2, CATSPER3 and CATSPER4 as well as auxiliary members CATSPERB, CATSPERG2, CATSPERD, CATSPERE, CATSPERZ, C2CD6/CATSPERT, SLCO6C1, TMEM249, TMEM262 and EFCAB9. HSPA1 may be an additional auxiliary complex member. The core complex members CATSPER1, CATSPER2, CATSPER3 and CATSPER4 form a heterotetrameric channel. The auxiliary CATSPERB, CATSPERG2, CATSPERD and CATSPERE subunits form a pavilion-like structure over the pore which stabilizes the complex through interactions with CATSPER4, CATSPER3, CATSPER1 and CATSPER2 respectively. SLCO6C1 interacts with CATSPERE and TMEM262/CATSPERH interacts with CATSPERB, further stabilizing the complex. C2CD6/CATSPERT interacts at least with CATSPERD and is required for targeting the CatSper complex in the flagellar membrane. Testis-specific.

The protein localises to the cell projection. It is found in the cilium. Its subcellular location is the flagellum membrane. The catalysed reaction is Ca(2+)(in) = Ca(2+)(out). Its activity is regulated as follows. In contrast to the human ortholog, not activated by progesterone. Activated by intracellular alkalinization. Functionally, pore-forming subunit of the CatSper complex, a sperm-specific voltage-gated calcium channel that plays a central role in sperm cell hyperactivation. Controls calcium entry to mediate the hyperactivated motility, a step needed for sperm motility which is essential late in the preparation of sperm for fertilization. This Mus musculus (Mouse) protein is Cation channel sperm-associated protein 4 (Catsper4).